A 362-amino-acid polypeptide reads, in one-letter code: Phosphoserine aminotransferase (362 aa).

Residue arginine 43 participates in L-glutamate binding. Residues 77 to 78, tryptophan 103, threonine 153, aspartate 173, and glutamine 196 each bind pyridoxal 5'-phosphate; that span reads AR. N6-(pyridoxal phosphate)lysine is present on lysine 197.

It belongs to the class-V pyridoxal-phosphate-dependent aminotransferase family. SerC subfamily. As to quaternary structure, homodimer. The cofactor is pyridoxal 5'-phosphate.

It is found in the cytoplasm. The enzyme catalyses O-phospho-L-serine + 2-oxoglutarate = 3-phosphooxypyruvate + L-glutamate. The catalysed reaction is 4-(phosphooxy)-L-threonine + 2-oxoglutarate = (R)-3-hydroxy-2-oxo-4-phosphooxybutanoate + L-glutamate. It participates in amino-acid biosynthesis; L-serine biosynthesis; L-serine from 3-phospho-D-glycerate: step 2/3. It functions in the pathway cofactor biosynthesis; pyridoxine 5'-phosphate biosynthesis; pyridoxine 5'-phosphate from D-erythrose 4-phosphate: step 3/5. In terms of biological role, catalyzes the reversible conversion of 3-phosphohydroxypyruvate to phosphoserine and of 3-hydroxy-2-oxo-4-phosphonooxybutanoate to phosphohydroxythreonine. This chain is Phosphoserine aminotransferase, found in Legionella pneumophila (strain Corby).